Consider the following 444-residue polypeptide: Glycerol-3-phosphate transporter (444 aa).

The Cytoplasmic portion of the chain corresponds to 1-36 (MLNIFKPAPHIERLDDSKMDAAYKRLRLQVFIGIFI). A helical transmembrane segment spans residues 37–57 (GYAGYYLLRKNFAFAIPYLQE). The Extracellular portion of the chain corresponds to 58 to 63 (QGFSKT). A helical transmembrane segment spans residues 64-84 (ELGLVLAAVSIAYGFSKFIMG). At 85-93 (MVSDRCNPR) the chain is on the cytoplasmic side. A helical membrane pass occupies residues 94 to 112 (YFLATGLFLSAIVNILFVS). The Extracellular segment spans residues 113–120 (MPWVTSSV). A helical transmembrane segment spans residues 121–141 (TIMFIFMFINGWFQGMGWPPC). At 142 to 160 (GRTMAHWFSISERGTKMSI) the chain is on the cytoplasmic side. Residues 161 to 180 (WNVAHNIGGGILAPLVTLGI) traverse the membrane as a helical segment. Residues 181 to 189 (AMFVTWKSV) lie on the Extracellular side of the membrane. The chain crosses the membrane as a helical span at residues 190–207 (FFFPAIIAIIISFLIVLL). Topologically, residues 208–261 (VRDTPQSCGLPPIEEYRNDYPKHAFKNQEKELTTKEILFQYVLNNKFLWYIAFA) are cytoplasmic. Residues 262–282 (NVFVYFVRYGVVDWAPTYLTE) form a helical membrane-spanning segment. Residues 283–287 (AKGFS) are Extracellular-facing. The chain crosses the membrane as a helical span at residues 288–308 (PEDSRWSYFLYEYAGIPGTIL). The Cytoplasmic segment spans residues 309 to 321 (CGWISDRFFKSRR). The helical transmembrane segment at 322 to 341 (APAGVLFMAGVFIAVLVYWL) threads the bilayer. Residues 342–346 (NPAGN) lie on the Extracellular side of the membrane. A helical transmembrane segment spans residues 347 to 368 (PLVDNIALISIGFLIYGPVMLI). Over 369-387 (GLQAIDLAPKKAAGTAAGL) the chain is Cytoplasmic. A helical transmembrane segment spans residues 388 to 409 (TGFFGYIGGSAFANAIMGFVVD). At 410-414 (RFNWN) the chain is on the extracellular side. The helical transmembrane segment at 415–435 (GGFIMLISSCILAIVFLALTW) threads the bilayer. Residues 436-444 (NTGKRAEHV) lie on the Cytoplasmic side of the membrane.

This sequence belongs to the major facilitator superfamily. Organophosphate:Pi antiporter (OPA) (TC 2.A.1.4) family.

The protein resides in the cell membrane. Responsible for glycerol-3-phosphate uptake. The sequence is that of Glycerol-3-phosphate transporter (glpT) from Bacillus subtilis (strain 168).